A 296-amino-acid chain; its full sequence is Phosphatidylserine decarboxylase proenzyme (296 aa).

Catalysis depends on charge relay system; for autoendoproteolytic cleavage activity residues aspartate 92, histidine 149, and serine 251. Catalysis depends on serine 251, which acts as the Schiff-base intermediate with substrate; via pyruvic acid; for decarboxylase activity. Residue serine 251 is modified to Pyruvic acid (Ser); by autocatalysis.

The protein belongs to the phosphatidylserine decarboxylase family. PSD-B subfamily. Prokaryotic type I sub-subfamily. Heterodimer of a large membrane-associated beta subunit and a small pyruvoyl-containing alpha subunit. Requires pyruvate as cofactor. Post-translationally, is synthesized initially as an inactive proenzyme. Formation of the active enzyme involves a self-maturation process in which the active site pyruvoyl group is generated from an internal serine residue via an autocatalytic post-translational modification. Two non-identical subunits are generated from the proenzyme in this reaction, and the pyruvate is formed at the N-terminus of the alpha chain, which is derived from the carboxyl end of the proenzyme. The autoendoproteolytic cleavage occurs by a canonical serine protease mechanism, in which the side chain hydroxyl group of the serine supplies its oxygen atom to form the C-terminus of the beta chain, while the remainder of the serine residue undergoes an oxidative deamination to produce ammonia and the pyruvoyl prosthetic group on the alpha chain. During this reaction, the Ser that is part of the protease active site of the proenzyme becomes the pyruvoyl prosthetic group, which constitutes an essential element of the active site of the mature decarboxylase.

Its subcellular location is the cell membrane. The catalysed reaction is a 1,2-diacyl-sn-glycero-3-phospho-L-serine + H(+) = a 1,2-diacyl-sn-glycero-3-phosphoethanolamine + CO2. It participates in phospholipid metabolism; phosphatidylethanolamine biosynthesis; phosphatidylethanolamine from CDP-diacylglycerol: step 2/2. Its function is as follows. Catalyzes the formation of phosphatidylethanolamine (PtdEtn) from phosphatidylserine (PtdSer). The chain is Phosphatidylserine decarboxylase proenzyme from Hahella chejuensis (strain KCTC 2396).